The chain runs to 161 residues: Crossover junction endodeoxyribonuclease RuvC (161 aa).

Active-site residues include aspartate 9, glutamate 69, and histidine 144. 3 residues coordinate Mg(2+): aspartate 9, glutamate 69, and histidine 144.

Belongs to the RuvC family. Homodimer which binds Holliday junction (HJ) DNA. The HJ becomes 2-fold symmetrical on binding to RuvC with unstacked arms; it has a different conformation from HJ DNA in complex with RuvA. In the full resolvosome a probable DNA-RuvA(4)-RuvB(12)-RuvC(2) complex forms which resolves the HJ. Mg(2+) serves as cofactor.

The protein resides in the cytoplasm. It carries out the reaction Endonucleolytic cleavage at a junction such as a reciprocal single-stranded crossover between two homologous DNA duplexes (Holliday junction).. Functionally, the RuvA-RuvB-RuvC complex processes Holliday junction (HJ) DNA during genetic recombination and DNA repair. Endonuclease that resolves HJ intermediates. Cleaves cruciform DNA by making single-stranded nicks across the HJ at symmetrical positions within the homologous arms, yielding a 5'-phosphate and a 3'-hydroxyl group; requires a central core of homology in the junction. The consensus cleavage sequence is 5'-(A/T)TT(C/G)-3'. Cleavage occurs on the 3'-side of the TT dinucleotide at the point of strand exchange. HJ branch migration catalyzed by RuvA-RuvB allows RuvC to scan DNA until it finds its consensus sequence, where it cleaves and resolves the cruciform DNA. This chain is Crossover junction endodeoxyribonuclease RuvC, found in Borrelia turicatae (strain 91E135).